The sequence spans 331 residues: D-alanine--D-alanine ligase (331 aa).

An ATP-grasp domain is found at 121–327 (KLWYDALGIP…FSQFLENCVR (207 aa)). Position 151 to 206 (151 to 206 (AFESWGKVFVKAARQGSSVGCYQVNQVEELSEAINKAFTFSDQVLIEKSVVPRELE)) interacts with ATP. Mg(2+)-binding residues include Asp281, Glu294, and Asn296.

Belongs to the D-alanine--D-alanine ligase family. Requires Mg(2+) as cofactor. Mn(2+) is required as a cofactor.

The protein resides in the cytoplasm. It catalyses the reaction 2 D-alanine + ATP = D-alanyl-D-alanine + ADP + phosphate + H(+). It functions in the pathway cell wall biogenesis; peptidoglycan biosynthesis. Its function is as follows. Cell wall formation. This chain is D-alanine--D-alanine ligase, found in Vibrio atlanticus (strain LGP32) (Vibrio splendidus (strain Mel32)).